The sequence spans 151 residues: Deoxyuridine 5'-triphosphate nucleotidohydrolase (151 aa).

Substrate is bound by residues 70 to 72 (RSG), asparagine 83, 87 to 89 (LID), and methionine 97.

Belongs to the dUTPase family. Requires Mg(2+) as cofactor.

The catalysed reaction is dUTP + H2O = dUMP + diphosphate + H(+). It participates in pyrimidine metabolism; dUMP biosynthesis; dUMP from dCTP (dUTP route): step 2/2. Functionally, this enzyme is involved in nucleotide metabolism: it produces dUMP, the immediate precursor of thymidine nucleotides and it decreases the intracellular concentration of dUTP so that uracil cannot be incorporated into DNA. This is Deoxyuridine 5'-triphosphate nucleotidohydrolase from Mannheimia succiniciproducens (strain KCTC 0769BP / MBEL55E).